We begin with the raw amino-acid sequence, 272 residues long: Putative phosphoenolpyruvate synthase regulatory protein (272 aa).

152-159 (GVSRCGKT) lines the ADP pocket.

Belongs to the pyruvate, phosphate/water dikinase regulatory protein family. PSRP subfamily.

It catalyses the reaction [pyruvate, water dikinase] + ADP = [pyruvate, water dikinase]-phosphate + AMP + H(+). The enzyme catalyses [pyruvate, water dikinase]-phosphate + phosphate + H(+) = [pyruvate, water dikinase] + diphosphate. Functionally, bifunctional serine/threonine kinase and phosphorylase involved in the regulation of the phosphoenolpyruvate synthase (PEPS) by catalyzing its phosphorylation/dephosphorylation. The sequence is that of Putative phosphoenolpyruvate synthase regulatory protein from Pseudomonas fluorescens (strain Pf0-1).